The sequence spans 418 residues: 3-isopropylmalate dehydratase large subunit 1 (418 aa).

[4Fe-4S] cluster is bound by residues Cys298, Cys358, and Cys361.

The protein belongs to the aconitase/IPM isomerase family. LeuC type 2 subfamily. As to quaternary structure, heterodimer of LeuC and LeuD. [4Fe-4S] cluster is required as a cofactor.

It catalyses the reaction (2R,3S)-3-isopropylmalate = (2S)-2-isopropylmalate. It participates in amino-acid biosynthesis; L-leucine biosynthesis; L-leucine from 3-methyl-2-oxobutanoate: step 2/4. Functionally, catalyzes the isomerization between 2-isopropylmalate and 3-isopropylmalate, via the formation of 2-isopropylmaleate. The polypeptide is 3-isopropylmalate dehydratase large subunit 1 (Archaeoglobus fulgidus (strain ATCC 49558 / DSM 4304 / JCM 9628 / NBRC 100126 / VC-16)).